Consider the following 572-residue polypeptide: Serine/threonine-protein kinase pak-1 (572 aa).

2 disordered regions span residues 1–71 (MKAF…SRPS) and 156–195 (QPYS…QGVP). Positions 67-80 (ISRPSNFEHTIHVG) constitute a CRIB domain. Positions 81–294 (YDPKTGEFTG…IVSIGNPDRK (214 aa)) are linker. Residues 178 to 195 (PMTTSTSSAGYNSKQGVP) are compositionally biased toward polar residues. The 252-residue stretch at 295–546 (YRKVDKIGSG…ASQLLTHPFL (252 aa)) folds into the Protein kinase domain. Residues 301–309 (IGSGASGSV) and Lys-324 each bind ATP. Asp-414 (proton acceptor) is an active-site residue.

The protein belongs to the protein kinase superfamily. STE Ser/Thr protein kinase family. STE20 subfamily. In terms of assembly, interacts with cdc-42 (GTP-bound form) and cedd-10 (GTP-bound form). Requires Mg(2+) as cofactor. The cofactor is Mn(2+). In terms of tissue distribution, specifically colocalized with cdc-42 and ced-10 at all hypodermal cell boundaries during embryo elongation throughout the second phase of embryogenesis. Expressed mainly in pharyngeal muscles, the CAN neurons, motor neurons in the ventral nerve cord, several cells in the tail region (including the B and Y cells from L1 to adult, the hypodermal blast cell T in the L1 and some of its progeny in later stages), and the distal tip cells.

It localises to the cell membrane. Its subcellular location is the cytoplasm. The protein localises to the cell projection. The protein resides in the axon. It is found in the perikaryon. It catalyses the reaction L-seryl-[protein] + ATP = O-phospho-L-seryl-[protein] + ADP + H(+). The catalysed reaction is L-threonyl-[protein] + ATP = O-phospho-L-threonyl-[protein] + ADP + H(+). In terms of biological role, required for hypodermal cell fusion, together with cdc-42 and ced-10, leading to embryonic body elongation, which involves dramatic cytoskeletal reorganization. Plays a redundant role with max-2 in dorsal axonal guidance in ventral cord commissural motoneurons and in P neuroblast migration. Acts probably downstream of Rho GTPases mig-2 and ced-10 to regulate these 2 processes. Involved in orientating axonal growth of HSN neurons. During gonad morphogenesis and probably in association with pix-1 and git-1, involved in the migration of distal tip cell (DTC) and in maintaining their sharp tapering morphology. In addition, plays a redundant role with max-2 in DTC-mediated guidance of gonad elongation. May phosphorylate mlc-4. The protein is Serine/threonine-protein kinase pak-1 (pak-1) of Caenorhabditis elegans.